A 96-amino-acid chain; its full sequence is Large ribosomal subunit protein bL25 (96 aa).

Belongs to the bacterial ribosomal protein bL25 family. As to quaternary structure, part of the 50S ribosomal subunit; part of the 5S rRNA/L5/L18/L25 subcomplex. Contacts the 5S rRNA. Binds to the 5S rRNA independently of L5 and L18.

In terms of biological role, this is one of the proteins that binds to the 5S RNA in the ribosome where it forms part of the central protuberance. This Francisella tularensis subsp. tularensis (strain FSC 198) protein is Large ribosomal subunit protein bL25.